We begin with the raw amino-acid sequence, 138 residues long: Growth factor (138 aa).

An N-terminal signal peptide occupies residues 1–19; the sequence is MSMKYLMLLFAAMIIRSFA. N-linked (GlcNAc...) asparagine; by host glycosylation is present at N34. The 41-residue stretch at 41 to 81 folds into the EGF-like domain; the sequence is AIRLCGPEGDGYCLHGDCIHARDIDGMYCRCSHGYTGIRCQ. Cystine bridges form between C45/C58, C53/C69, and C71/C80. N-linked (GlcNAc...) asparagine; by host glycosylation is present at N95.

It belongs to the orthopoxvirus OPG019 family.

It localises to the secreted. Functionally, stimulates cellular proliferation (hyperplasia)and mobility around infected cells to promote rapid and efficient spread of infection. This chain is Growth factor (OPG019), found in Rabbitpox virus (strain Utrecht) (RPV).